An 87-amino-acid polypeptide reads, in one-letter code: MIYLDEFTGMEVSIVDSPNRSEIGRTGLVSFETKNTLEIDTGRKRIMIPKHLRKFRINGQFVDGDLINMRPEDRLREYRRILRDLRR.

Belongs to the eukaryotic/archaeal RNase P protein component 1 family. As to quaternary structure, consists of a catalytic RNA component and at least 4-5 protein subunits.

The protein resides in the cytoplasm. The enzyme catalyses Endonucleolytic cleavage of RNA, removing 5'-extranucleotides from tRNA precursor.. Functionally, part of ribonuclease P, a protein complex that generates mature tRNA molecules by cleaving their 5'-ends. This Thermoplasma acidophilum (strain ATCC 25905 / DSM 1728 / JCM 9062 / NBRC 15155 / AMRC-C165) protein is Ribonuclease P protein component 1.